The primary structure comprises 261 residues: tRNA pseudouridine synthase A (261 aa).

The active-site Nucleophile is aspartate 51. Residue tyrosine 109 coordinates substrate.

The protein belongs to the tRNA pseudouridine synthase TruA family. As to quaternary structure, homodimer.

It catalyses the reaction uridine(38/39/40) in tRNA = pseudouridine(38/39/40) in tRNA. Functionally, formation of pseudouridine at positions 38, 39 and 40 in the anticodon stem and loop of transfer RNAs. The polypeptide is tRNA pseudouridine synthase A (Tolumonas auensis (strain DSM 9187 / NBRC 110442 / TA 4)).